The primary structure comprises 306 residues: sn-1-specific diacylglycerol lipase ABHD11 (306 aa).

The disordered stretch occupies residues 19–40; sequence GPSFARVPVAPSSSSGGRGGAE. The segment covering 23 to 33 has biased composition (low complexity); the sequence is ARVPVAPSSSS. Lysine 78 is subject to N6-succinyllysine. Catalysis depends on charge relay system residues serine 132, aspartate 228, and histidine 287.

This sequence belongs to the AB hydrolase superfamily. Interacts with OGDH and DLST; this interaction maintains the functional lipoylation of the 2-oxoglutarate dehydrogenase complex. Phosphorylated. Ubiquitously expressed. Highly expressed in small intestine, prostate and thyroid, while aorta and colon tissues exhibit weak expression levels.

It is found in the mitochondrion. The protein resides in the mitochondrion matrix. It catalyses the reaction 1-octadecanoyl-2-(5Z,8Z,11Z,14Z-eicosatetraenoyl)-sn-glycerol + H2O = 2-(5Z,8Z,11Z,14Z-eicosatetraenoyl)-glycerol + octadecanoate + H(+). The catalysed reaction is a 1,2-diacyl-sn-glycerol + H2O = a 2-acylglycerol + a fatty acid + H(+). The enzyme catalyses a 1,3-diacyl-sn-glycerol + H2O = a 1-acyl-sn-glycerol + a fatty acid + H(+). It carries out the reaction 1-octadecanoyl-2-(9Z-octadecenoyl)-sn-glycerol + H2O = 2-(9Z-octadecenoyl)-glycerol + octadecanoate + H(+). It catalyses the reaction 1-octadecanoyl-2-(4Z,7Z,10Z,13Z,16Z,19Z-docosahexaenoyl)-sn-glycerol + H2O = 2-(4Z,7Z,10Z,13Z,16Z,19Z-docosahexaenoyl)-glycerol + octadecanoate + H(+). The catalysed reaction is 1,2-didecanoylglycerol + H2O = decanoylglycerol + decanoate + H(+). Functionally, catalyzes the hydrolysis of diacylglycerol in vitro and may function as a key regulator in lipid metabolism, namely by regulating the intracellular levels of diacylglycerol. 1,2-diacyl-sn-glycerols are the preferred substrate over 1,3-diacyl-sn-glycerols. The enzyme hydrolyzes stearate in preference to palmitate from the sn-1 position of 1,2-diacyl-sn-glycerols. Maintains the functional lipoylation of the 2-oxoglutarate dehydrogenase complex (OGDHc) through its interaction with the OGDHc by preventing the formation of lipoyl adducts. In addition, is also required for the expansion and differentiation of embryonic stem cells (ESCs). The polypeptide is sn-1-specific diacylglycerol lipase ABHD11 (Homo sapiens (Human)).